We begin with the raw amino-acid sequence, 405 residues long: Tryptophan synthase beta chain (405 aa).

Residue K86 is modified to N6-(pyridoxal phosphate)lysine.

Belongs to the TrpB family. In terms of assembly, tetramer of two alpha and two beta chains. Pyridoxal 5'-phosphate is required as a cofactor.

It carries out the reaction (1S,2R)-1-C-(indol-3-yl)glycerol 3-phosphate + L-serine = D-glyceraldehyde 3-phosphate + L-tryptophan + H2O. Its pathway is amino-acid biosynthesis; L-tryptophan biosynthesis; L-tryptophan from chorismate: step 5/5. Its function is as follows. The beta subunit is responsible for the synthesis of L-tryptophan from indole and L-serine. The chain is Tryptophan synthase beta chain from Shewanella piezotolerans (strain WP3 / JCM 13877).